The primary structure comprises 200 residues: Large ribosomal subunit protein uL4 (200 aa).

Residues 43–71 (RAQKTRAEVSGSGKKPWRQKGTGRARSGD) form a disordered region.

The protein belongs to the universal ribosomal protein uL4 family. As to quaternary structure, part of the 50S ribosomal subunit.

Its function is as follows. One of the primary rRNA binding proteins, this protein initially binds near the 5'-end of the 23S rRNA. It is important during the early stages of 50S assembly. It makes multiple contacts with different domains of the 23S rRNA in the assembled 50S subunit and ribosome. In terms of biological role, forms part of the polypeptide exit tunnel. The polypeptide is Large ribosomal subunit protein uL4 (Pasteurella multocida (strain Pm70)).